Here is a 130-residue protein sequence, read N- to C-terminus: Phosphoribosyl-AMP cyclohydrolase 1 (130 aa).

Position 77 (D77) interacts with Mg(2+). Zn(2+) is bound at residue C78. Residues D79 and D81 each contribute to the Mg(2+) site. 2 residues coordinate Zn(2+): C95 and C102.

This sequence belongs to the PRA-CH family. In terms of assembly, homodimer. Mg(2+) serves as cofactor. Requires Zn(2+) as cofactor.

The protein localises to the cytoplasm. The enzyme catalyses 1-(5-phospho-beta-D-ribosyl)-5'-AMP + H2O = 1-(5-phospho-beta-D-ribosyl)-5-[(5-phospho-beta-D-ribosylamino)methylideneamino]imidazole-4-carboxamide. It functions in the pathway amino-acid biosynthesis; L-histidine biosynthesis; L-histidine from 5-phospho-alpha-D-ribose 1-diphosphate: step 3/9. Functionally, catalyzes the hydrolysis of the adenine ring of phosphoribosyl-AMP. The chain is Phosphoribosyl-AMP cyclohydrolase 1 from Pseudomonas fluorescens (strain ATCC BAA-477 / NRRL B-23932 / Pf-5).